A 494-amino-acid polypeptide reads, in one-letter code: Glucose-6-phosphate 1-dehydrogenase (494 aa).

The NADP(+) site is built by Arg-46 and Lys-150. Substrate-binding residues include His-180, Lys-184, Glu-218, and Asp-237. The Proton acceptor role is filled by His-242. Residue Lys-342 coordinates substrate.

It belongs to the glucose-6-phosphate dehydrogenase family.

It catalyses the reaction D-glucose 6-phosphate + NADP(+) = 6-phospho-D-glucono-1,5-lactone + NADPH + H(+). The protein operates within carbohydrate degradation; pentose phosphate pathway; D-ribulose 5-phosphate from D-glucose 6-phosphate (oxidative stage): step 1/3. Functionally, catalyzes the oxidation of glucose 6-phosphate to 6-phosphogluconolactone. This Aggregatibacter actinomycetemcomitans (Actinobacillus actinomycetemcomitans) protein is Glucose-6-phosphate 1-dehydrogenase.